The primary structure comprises 461 residues: Argininosuccinate lyase (461 aa).

The protein belongs to the lyase 1 family. Argininosuccinate lyase subfamily.

It localises to the cytoplasm. The enzyme catalyses 2-(N(omega)-L-arginino)succinate = fumarate + L-arginine. It participates in amino-acid biosynthesis; L-arginine biosynthesis; L-arginine from L-ornithine and carbamoyl phosphate: step 3/3. The sequence is that of Argininosuccinate lyase from Syntrophotalea carbinolica (strain DSM 2380 / NBRC 103641 / GraBd1) (Pelobacter carbinolicus).